Consider the following 567-residue polypeptide: Proline--tRNA ligase (567 aa).

Belongs to the class-II aminoacyl-tRNA synthetase family. ProS type 1 subfamily. Homodimer.

It is found in the cytoplasm. It carries out the reaction tRNA(Pro) + L-proline + ATP = L-prolyl-tRNA(Pro) + AMP + diphosphate. In terms of biological role, catalyzes the attachment of proline to tRNA(Pro) in a two-step reaction: proline is first activated by ATP to form Pro-AMP and then transferred to the acceptor end of tRNA(Pro). As ProRS can inadvertently accommodate and process non-cognate amino acids such as alanine and cysteine, to avoid such errors it has two additional distinct editing activities against alanine. One activity is designated as 'pretransfer' editing and involves the tRNA(Pro)-independent hydrolysis of activated Ala-AMP. The other activity is designated 'posttransfer' editing and involves deacylation of mischarged Ala-tRNA(Pro). The misacylated Cys-tRNA(Pro) is not edited by ProRS. The chain is Proline--tRNA ligase from Geobacillus sp. (strain WCH70).